Reading from the N-terminus, the 31-residue chain is Cytochrome b6-f complex subunit 6 (31 aa).

The helical transmembrane segment at 4–26 (ITSYFGFLLAASTITPALLIGLN) threads the bilayer.

This sequence belongs to the PetL family. In terms of assembly, the 4 large subunits of the cytochrome b6-f complex are cytochrome b6, subunit IV (17 kDa polypeptide, PetD), cytochrome f and the Rieske protein, while the 4 small subunits are PetG, PetL, PetM and PetN. The complex functions as a dimer.

The protein localises to the plastid. It is found in the chloroplast thylakoid membrane. Its function is as follows. Component of the cytochrome b6-f complex, which mediates electron transfer between photosystem II (PSII) and photosystem I (PSI), cyclic electron flow around PSI, and state transitions. PetL is important for photoautotrophic growth as well as for electron transfer efficiency and stability of the cytochrome b6-f complex. The sequence is that of Cytochrome b6-f complex subunit 6 from Calycanthus floridus var. glaucus (Eastern sweetshrub).